Here is a 232-residue protein sequence, read N- to C-terminus: Ribonuclease 3 (232 aa).

The RNase III domain maps to 6–137; that stretch reads QEMLKRDFNI…FIGALYLDQG (132 aa). Glu50 contacts Mg(2+). Asp54 is a catalytic residue. Mg(2+) contacts are provided by Asp123 and Glu126. Residue Glu126 is part of the active site. Positions 163 to 232 constitute a DRBM domain; the sequence is DNKTELQEVL…AYQALKKLRK (70 aa).

This sequence belongs to the ribonuclease III family. Homodimer. It depends on Mg(2+) as a cofactor.

It is found in the cytoplasm. The catalysed reaction is Endonucleolytic cleavage to 5'-phosphomonoester.. Functionally, digests double-stranded RNA. Involved in the processing of primary rRNA transcript to yield the immediate precursors to the large and small rRNAs (23S and 16S). Processes some mRNAs, and tRNAs when they are encoded in the rRNA operon. Processes pre-crRNA and tracrRNA of type II CRISPR loci if present in the organism. In Ligilactobacillus salivarius (strain UCC118) (Lactobacillus salivarius), this protein is Ribonuclease 3.